We begin with the raw amino-acid sequence, 127 residues long: Spore germination protein 1 (127 aa).

A signal peptide spans 1–25 (MNIKNSLILIISTIFVLSMINGGLT). N-linked (GlcNAc...) asparagine glycosylation is found at Asn-54 and Asn-118.

Belongs to the Dictyostelium gerABC family.

It localises to the secreted. The chain is Spore germination protein 1 (gerA) from Dictyostelium discoideum (Social amoeba).